We begin with the raw amino-acid sequence, 202 residues long: Na(+)-translocating NADH-quinone reductase subunit E (202 aa).

The next 6 helical transmembrane spans lie at 5-25, 35-55, 81-101, 114-134, 144-164, and 180-200; these read VSLF…FLGM, VSTA…TVPL, FLGL…LEMF, GVFL…LFMV, LTYG…LAGI, and LGIT…FGGM.

Belongs to the NqrDE/RnfAE family. Composed of six subunits; NqrA, NqrB, NqrC, NqrD, NqrE and NqrF.

It localises to the cell inner membrane. It catalyses the reaction a ubiquinone + n Na(+)(in) + NADH + H(+) = a ubiquinol + n Na(+)(out) + NAD(+). NQR complex catalyzes the reduction of ubiquinone-1 to ubiquinol by two successive reactions, coupled with the transport of Na(+) ions from the cytoplasm to the periplasm. NqrA to NqrE are probably involved in the second step, the conversion of ubisemiquinone to ubiquinol. In Psychrobacter sp. (strain PRwf-1), this protein is Na(+)-translocating NADH-quinone reductase subunit E.